A 580-amino-acid chain; its full sequence is MSQPLETFDVIVIGAGWYGLMAARTFLELAPDTNLLILDDGKTVGGVWSKERIYPSLFAQISHPLFEYSFYPMPEEDISPDGFVSGKTIQKYLEAFAKDHGLILHLRLETRVEKVKRGVNSNEWILEIKGDKPLACSKLIYATGANSSPIIPKWPREGFEKPVIHSLDLGRYQDYIANNVQKAVVVGRSKSSYDAVYHLLCAGKKVNWVMRDGQSGPFSLYAPTFMGLWNIADHISTRFASSFSPCIMSTDGFCYNFFQRSALGRVLTNMYWRTANYLSVSHAEYWRTENSEKLRPRPYSDGVFWGSGGIGIATAPDFWETFHRGDVTIHSTEIESVSHKDVTNLKNGYSIATDIIIHCTGFDKGYGAFDPQLRNELGLEYNTKEFSRWTMLDEKADQTVDRLLPYICDSPNQYGDSEASRSTGQGPNRHYRRLVVPELAARGDRSILFPGHIHSAFTPLAAELQALWGVSWMLGWRDLPSKEEMETEAANFNAWTRKRYLEQGRKHSYFIYDYIPYIDTLMKDLGLDPFRKSNVFEEWFVRYKPSDYKTILEEYRSVRRHEREMERSGEESVARMKRCD.

Residue 47–50 (VWSK) coordinates FAD. 58-60 (FAQ) is a binding site for NADP(+). FAD is bound at residue Val-112. Residues 186-205 (VGRS…AGKK), 222-223 (AP), and 354-355 (DI) contribute to the NADP(+) site. Met-473 is an FAD binding site.

The protein belongs to the FAD-binding monooxygenase family. FAD serves as cofactor.

It functions in the pathway polyketide biosynthesis. Part of the gene cluster that mediates the biosynthesis of depudecin, a highly oxidized eleven-carbon linear polyketide that acts as a histone deacetylase (HDAC) inhibitor and makes a small contribution to pathogenesis. The reducing polyketide synthase DEP5 is the central enzyme in depudecin biosynthesis by yielding the backbone polyketide chain. The monooxygenases DEP2 and DEP4, as well as the uncharacterized protein DEP1, then act as tailoring enzymes to modify the intermediate polyketide chain into depudecin. This Fusarium langsethiae protein is FAD-dependent monooxygenase DEP4.